Consider the following 662-residue polypeptide: Chaperone protein HtpG (662 aa).

An a; substrate-binding region spans residues 1 to 352; it reads MSKQTLSFQA…SADLPLNVSR (352 aa). The tract at residues 353–594 is b; the sequence is ELLQESRDVR…GDGMSTQLAR (242 aa). Residues 382-402 form a disordered region; sequence HDRHDSPAPQPAEGADRVSDV. The interval 595–662 is c; it reads LLKQAGQQAP…YVKRVNALLV (68 aa).

This sequence belongs to the heat shock protein 90 family. Homodimer.

It is found in the cytoplasm. In terms of biological role, molecular chaperone. Has ATPase activity. This Verminephrobacter eiseniae (strain EF01-2) protein is Chaperone protein HtpG.